A 311-amino-acid chain; its full sequence is Methionyl-tRNA formyltransferase (311 aa).

A (6S)-5,6,7,8-tetrahydrofolate-binding site is contributed by 109-112 (SLLP).

This sequence belongs to the Fmt family.

It carries out the reaction L-methionyl-tRNA(fMet) + (6R)-10-formyltetrahydrofolate = N-formyl-L-methionyl-tRNA(fMet) + (6S)-5,6,7,8-tetrahydrofolate + H(+). In terms of biological role, attaches a formyl group to the free amino group of methionyl-tRNA(fMet). The formyl group appears to play a dual role in the initiator identity of N-formylmethionyl-tRNA by promoting its recognition by IF2 and preventing the misappropriation of this tRNA by the elongation apparatus. The protein is Methionyl-tRNA formyltransferase of Marinobacter nauticus (strain ATCC 700491 / DSM 11845 / VT8) (Marinobacter aquaeolei).